Reading from the N-terminus, the 412-residue chain is Maintenance of mitochondrial morphology protein 1 (412 aa).

Topologically, residues 1-19 (MAQDVCPTRSEPSLSFLQG) are lumenal. Residues 20 to 40 (LILGQLSVVLLIAAFIKFFIF) traverse the membrane as a helical segment. The Cytoplasmic portion of the chain corresponds to 41-412 (GEAPSAEETA…GSLPGIDMPT (372 aa)). Positions 121–337 (QPESLDWFNV…EPRFQEIELP (217 aa)) constitute an SMP-LTD domain. Over residues 372–384 (ARQELDTETDGLR) the composition is skewed to basic and acidic residues. The interval 372-412 (ARQELDTETDGLRYRRRPVGDDTYSVSGSMPGSLPGIDMPT) is disordered.

The protein belongs to the MMM1 family. As to quaternary structure, homodimer. Component of the ER-mitochondria encounter structure (ERMES) or MDM complex, composed of MMM1, MDM10, MDM12 and MDM34. An MMM1 homodimer associates with one molecule of MDM12 on each side in a pairwise head-to-tail manner, and the SMP-LTD domains of MMM1 and MDM12 generate a continuous hydrophobic tunnel for phospholipid trafficking.

The protein resides in the endoplasmic reticulum membrane. In terms of biological role, component of the ERMES/MDM complex, which serves as a molecular tether to connect the endoplasmic reticulum (ER) and mitochondria. Components of this complex are involved in the control of mitochondrial shape and protein biogenesis, and function in nonvesicular lipid trafficking between the ER and mitochondria. The MDM12-MMM1 subcomplex functions in the major beta-barrel assembly pathway that is responsible for biogenesis of all outer membrane beta-barrel proteins, and acts in a late step after the SAM complex. The MDM10-MDM12-MMM1 subcomplex further acts in the TOM40-specific pathway after the action of the MDM12-MMM1 complex. Essential for establishing and maintaining the structure of mitochondria and maintenance of mtDNA nucleoids. This chain is Maintenance of mitochondrial morphology protein 1, found in Podospora anserina (strain S / ATCC MYA-4624 / DSM 980 / FGSC 10383) (Pleurage anserina).